Reading from the N-terminus, the 434-residue chain is Putative neutral sphingomyelinase (434 aa).

E83 is a Mg(2+) binding site. H318 (proton acceptor) is an active-site residue. 2 helical membrane passes run 366 to 388 and 392 to 414; these read IFFF…FEVF and FAVL…LIGL.

This sequence belongs to the neutral sphingomyelinase family.

Its subcellular location is the membrane. The enzyme catalyses an N-(acyl)-sphingosylphosphocholine + H2O = an N-acyl-sphingoid base + phosphocholine + H(+). It catalyses the reaction a sphingomyelin + H2O = phosphocholine + an N-acylsphing-4-enine + H(+). The catalysed reaction is an N-acyl-15-methylhexadecasphing-4-enine-1-phosphocholine + H2O = an N-acyl-15-methylhexadecasphing-4-enine + phosphocholine + H(+). Its pathway is lipid metabolism; sphingolipid metabolism. Its function is as follows. Catalyzes the hydrolysis of sphingomyelin producing a ceramide (N-acyl-sphingoid base) and a phosphocholine. C.elegans contain specific sphingoid bases, which are unique or different in structure compared to the sphingoid bases found in other animals. Two examples of these distinctive compounds are: 15-methylhexadecasphinganine and 15-methylhexadecasphing-4-enine. This is Putative neutral sphingomyelinase from Caenorhabditis elegans.